The following is a 215-amino-acid chain: N-(5'-phosphoribosyl)anthranilate isomerase (215 aa).

Belongs to the TrpF family.

The catalysed reaction is N-(5-phospho-beta-D-ribosyl)anthranilate = 1-(2-carboxyphenylamino)-1-deoxy-D-ribulose 5-phosphate. It participates in amino-acid biosynthesis; L-tryptophan biosynthesis; L-tryptophan from chorismate: step 3/5. The sequence is that of N-(5'-phosphoribosyl)anthranilate isomerase from Chlorobium phaeobacteroides (strain DSM 266 / SMG 266 / 2430).